We begin with the raw amino-acid sequence, 223 residues long: ATP phosphoribosyltransferase (223 aa).

It belongs to the ATP phosphoribosyltransferase family. Short subfamily. Heteromultimer composed of HisG and HisZ subunits.

Its subcellular location is the cytoplasm. It catalyses the reaction 1-(5-phospho-beta-D-ribosyl)-ATP + diphosphate = 5-phospho-alpha-D-ribose 1-diphosphate + ATP. It functions in the pathway amino-acid biosynthesis; L-histidine biosynthesis; L-histidine from 5-phospho-alpha-D-ribose 1-diphosphate: step 1/9. Its function is as follows. Catalyzes the condensation of ATP and 5-phosphoribose 1-diphosphate to form N'-(5'-phosphoribosyl)-ATP (PR-ATP). Has a crucial role in the pathway because the rate of histidine biosynthesis seems to be controlled primarily by regulation of HisG enzymatic activity. The protein is ATP phosphoribosyltransferase of Desulfitobacterium hafniense (strain Y51).